The chain runs to 141 residues: Zinc finger protein 593 homolog (141 aa).

Positions 1–32 are disordered; that stretch reads MGRYSGHGGTHTKKKQYKRARSTKNRAKDIDQ. Over residues 10-25 the composition is skewed to basic residues; sequence THTKKKQYKRARSTKN. A C2H2-type zinc finger spans residues 60–84; that stretch reads NYCIHCSKHFVTNEDLQSHIKGKPH.

The protein belongs to the ZNF593/BUD20 C2H2-type zinc-finger protein family. Associates with pre-60S ribosomal particles; released from the pre-60S particle very early in the cytoplasm.

Its subcellular location is the nucleus. The protein resides in the cytoplasm. Its function is as follows. Involved in pre-60S ribosomal particles maturation by promoting the nuclear export of the 60S ribosome. This chain is Zinc finger protein 593 homolog, found in Dictyostelium discoideum (Social amoeba).